The sequence spans 334 residues: Protein-methionine-sulfoxide reductase catalytic subunit MsrP (334 aa).

Positions 1 to 44 form a signal peptide, tat-type signal; it reads MKKNQFLKESDVTAESVFFMKRRQVLKALGISAAAFSLPHAAHA. Residues Asn88, 91-92, Cys146, Thr181, Asn233, Arg238, and 249-251 contribute to the Mo-molybdopterin site; these read YE and GIK.

It belongs to the MsrP family. Heterodimer of a catalytic subunit (MsrP) and a heme-binding subunit (MsrQ). The cofactor is Mo-molybdopterin. Post-translationally, predicted to be exported by the Tat system. The position of the signal peptide cleavage has not been experimentally proven.

It is found in the periplasm. The catalysed reaction is L-methionyl-[protein] + a quinone + H2O = L-methionyl-(S)-S-oxide-[protein] + a quinol. It catalyses the reaction L-methionyl-[protein] + a quinone + H2O = L-methionyl-(R)-S-oxide-[protein] + a quinol. Functionally, part of the MsrPQ system that repairs oxidized periplasmic proteins containing methionine sulfoxide residues (Met-O), using respiratory chain electrons. Thus protects these proteins from oxidative-stress damage caused by reactive species of oxygen and chlorine generated by the host defense mechanisms. MsrPQ is essential for the maintenance of envelope integrity under bleach stress, rescuing a wide series of structurally unrelated periplasmic proteins from methionine oxidation, including the primary periplasmic chaperone SurA and the lipoprotein Pal. The catalytic subunit MsrP is non-stereospecific, being able to reduce both (R-) and (S-) diastereoisomers of methionine sulfoxide. This chain is Protein-methionine-sulfoxide reductase catalytic subunit MsrP, found in Escherichia coli O7:K1 (strain IAI39 / ExPEC).